The sequence spans 683 residues: Phenoloxidase 3 (683 aa).

The propeptide occupies 1-48 (MADKKNLLLLFDHPTEPVFMDKGGNGTVFDVPASYVTDRYNKMCKKVQ). An N-linked (GlcNAc...) asparagine glycan is attached at N25. 3 residues coordinate Cu cation: H209, H213, and H239. E351 (proton acceptor) is an active-site residue. The N-linked (GlcNAc...) asparagine glycan is linked to N358. Cu cation-binding residues include H366, H370, and H406. N-linked (GlcNAc...) asparagine glycans are attached at residues N492 and N514. Disulfide bonds link C574–C617 and C576–C624.

The protein belongs to the tyrosinase family. Cu(2+) is required as a cofactor. Upon activation, a trypsin type protease cleaves prophenol oxidase to yield the active enzyme.

It is found in the secreted. The catalysed reaction is 2 L-dopa + O2 = 2 L-dopaquinone + 2 H2O. The enzyme catalyses L-tyrosine + O2 = L-dopaquinone + H2O. Its function is as follows. This is a copper-containing oxidase that functions in the formation of pigments such as melanins and other polyphenolic compounds. Catalyzes the rate-limiting conversions of tyrosine to DOPA, DOPA to DOPA-quinone and possibly 5,6 dihydroxyindole to indole-5'6 quinone. In Drosophila erecta (Fruit fly), this protein is Phenoloxidase 3 (PPO3).